Consider the following 232-residue polypeptide: Ribose-5-phosphate isomerase A (232 aa).

Substrate-binding positions include 31-34 (TGST), 87-90 (DGAD), and 100-103 (KGGG). Residue E109 is the Proton acceptor of the active site. A substrate-binding site is contributed by K127.

This sequence belongs to the ribose 5-phosphate isomerase family. In terms of assembly, homodimer.

It catalyses the reaction aldehydo-D-ribose 5-phosphate = D-ribulose 5-phosphate. It functions in the pathway carbohydrate degradation; pentose phosphate pathway; D-ribose 5-phosphate from D-ribulose 5-phosphate (non-oxidative stage): step 1/1. Catalyzes the reversible conversion of ribose-5-phosphate to ribulose 5-phosphate. The protein is Ribose-5-phosphate isomerase A of Bifidobacterium adolescentis (strain ATCC 15703 / DSM 20083 / NCTC 11814 / E194a).